Consider the following 288-residue polypeptide: Polyamine aminopropyltransferase (288 aa).

The 230-residue stretch at 9-238 (ETLHDQFGQY…GIMTFAWATD (230 aa)) folds into the PABS domain. Residue Gln-33 participates in S-methyl-5'-thioadenosine binding. Positions 64 and 88 each coordinate spermidine. Residues Glu-108 and 140–141 (DG) each bind S-methyl-5'-thioadenosine. The active-site Proton acceptor is Asp-158. A spermidine-binding site is contributed by 158–161 (DCTD). Pro-165 is an S-methyl-5'-thioadenosine binding site.

It belongs to the spermidine/spermine synthase family. In terms of assembly, homodimer or homotetramer.

Its subcellular location is the cytoplasm. It carries out the reaction S-adenosyl 3-(methylsulfanyl)propylamine + putrescine = S-methyl-5'-thioadenosine + spermidine + H(+). It participates in amine and polyamine biosynthesis; spermidine biosynthesis; spermidine from putrescine: step 1/1. Its function is as follows. Catalyzes the irreversible transfer of a propylamine group from the amino donor S-adenosylmethioninamine (decarboxy-AdoMet) to putrescine (1,4-diaminobutane) to yield spermidine. The chain is Polyamine aminopropyltransferase from Escherichia coli (strain ATCC 8739 / DSM 1576 / NBRC 3972 / NCIMB 8545 / WDCM 00012 / Crooks).